We begin with the raw amino-acid sequence, 211 residues long: Large ribosomal subunit protein bL25 (211 aa).

Residues 188-211 are disordered; the sequence is HREEEKAPEETGEAAPAPTPETGQ. Low complexity predominate over residues 200 to 211; sequence EAAPAPTPETGQ.

This sequence belongs to the bacterial ribosomal protein bL25 family. CTC subfamily. Part of the 50S ribosomal subunit; part of the 5S rRNA/L5/L18/L25 subcomplex. Contacts the 5S rRNA. Binds to the 5S rRNA independently of L5 and L18.

Functionally, this is one of the proteins that binds to the 5S RNA in the ribosome where it forms part of the central protuberance. The chain is Large ribosomal subunit protein bL25 from Desulforudis audaxviator (strain MP104C).